A 125-amino-acid chain; its full sequence is Large ribosomal subunit protein bL17 (125 aa).

The protein belongs to the bacterial ribosomal protein bL17 family. In terms of assembly, part of the 50S ribosomal subunit. Contacts protein L32.

This Acinetobacter baumannii (strain AB0057) protein is Large ribosomal subunit protein bL17.